Reading from the N-terminus, the 565-residue chain is NAD-dependent malic enzyme (565 aa).

Tyr-104 acts as the Proton donor in catalysis. Arg-157 provides a ligand contact to NAD(+). Lys-175 acts as the Proton acceptor in catalysis. The a divalent metal cation site is built by Glu-246, Asp-247, and Asp-270. NAD(+) contacts are provided by Asp-270 and Asn-418.

The protein belongs to the malic enzymes family. Homotetramer. Mg(2+) is required as a cofactor. It depends on Mn(2+) as a cofactor.

It catalyses the reaction (S)-malate + NAD(+) = pyruvate + CO2 + NADH. The enzyme catalyses oxaloacetate + H(+) = pyruvate + CO2. The polypeptide is NAD-dependent malic enzyme (Salmonella heidelberg (strain SL476)).